Reading from the N-terminus, the 154-residue chain is MEIIKDIVSLIASILIFLGSIIALISAIGIVKFQDVFLRSHASTKSSTLSVLLTVVGVLIYFIVNSGFFSVRLLLSLVFINLTSPVGMHLISRAAYRNGAYMYRKDDASRQSTILLSQKEFNTPEELKKRAKLREERREKLYYKEKEYINKMDD.

The next 3 helical transmembrane spans lie at 11 to 31, 51 to 71, and 72 to 92; these read IASILIFLGSIIALISAIGIV, VLLTVVGVLIYFIVNSGFFSV, and RLLLSLVFINLTSPVGMHLIS.

Belongs to the CPA3 antiporters (TC 2.A.63) subunit G family. In terms of assembly, may form a heterooligomeric complex that consists of seven subunits: mnhA2, mnhB2, mnhC2, mnhD2, mnhE2, mnhF2 and mnhG2.

Its subcellular location is the cell membrane. The sequence is that of Putative antiporter subunit mnhG2 (mnhG2) from Staphylococcus epidermidis (strain ATCC 35984 / DSM 28319 / BCRC 17069 / CCUG 31568 / BM 3577 / RP62A).